Consider the following 286-residue polypeptide: Probable endonuclease 4 (286 aa).

Zn(2+)-binding residues include histidine 67, histidine 107, glutamate 144, aspartate 178, histidine 181, histidine 215, aspartate 228, histidine 230, and glutamate 260.

The protein belongs to the AP endonuclease 2 family. The cofactor is Zn(2+).

It carries out the reaction Endonucleolytic cleavage to 5'-phosphooligonucleotide end-products.. Functionally, endonuclease IV plays a role in DNA repair. It cleaves phosphodiester bonds at apurinic or apyrimidinic (AP) sites, generating a 3'-hydroxyl group and a 5'-terminal sugar phosphate. The sequence is that of Probable endonuclease 4 from Chloroflexus aggregans (strain MD-66 / DSM 9485).